The sequence spans 1070 residues: DNA-directed RNA polymerase subunit beta (1070 aa).

The protein belongs to the RNA polymerase beta chain family. As to quaternary structure, in plastids the minimal PEP RNA polymerase catalytic core is composed of four subunits: alpha, beta, beta', and beta''. When a (nuclear-encoded) sigma factor is associated with the core the holoenzyme is formed, which can initiate transcription.

It is found in the plastid. Its subcellular location is the chloroplast. It catalyses the reaction RNA(n) + a ribonucleoside 5'-triphosphate = RNA(n+1) + diphosphate. Its function is as follows. DNA-dependent RNA polymerase catalyzes the transcription of DNA into RNA using the four ribonucleoside triphosphates as substrates. This is DNA-directed RNA polymerase subunit beta from Solanum bulbocastanum (Wild potato).